The chain runs to 219 residues: Biofilm-associated metzincin protease inhibitor (219 aa).

The helical transmembrane segment at 4 to 24 (TWIYAASAAAIGGALIGGWLL) threads the bilayer. The span at 191–204 (DIAARSDPHGDHVD) shows a compositional bias: basic and acidic residues. A disordered region spans residues 191 to 219 (DIAARSDPHGDHVDAPLAELPPMPPPAQG). The segment covering 209–219 (ELPPMPPPAQG) has biased composition (pro residues).

The protein resides in the cell membrane. Its function is as follows. Inhibitor of the metalloendopeptidase Mep72. Forms a protein-protein complex with the protease, which is the product of its coregulated adjacent gene, and probably prevents premature protease activity until the protein has been secreted. The protein is Biofilm-associated metzincin protease inhibitor of Pseudomonas aeruginosa (strain ATCC 15692 / DSM 22644 / CIP 104116 / JCM 14847 / LMG 12228 / 1C / PRS 101 / PAO1).